The following is a 120-amino-acid chain: NAD(P)H-quinone oxidoreductase subunit 3, chloroplastic (120 aa).

A run of 3 helical transmembrane segments spans residues 9–29 (IFWT…SISG), 64–84 (MFAL…PWAM), and 88–108 (VLGV…VVGL).

Belongs to the complex I subunit 3 family. In terms of assembly, NDH is composed of at least 16 different subunits, 5 of which are encoded in the nucleus.

The protein resides in the plastid. It localises to the chloroplast thylakoid membrane. It carries out the reaction a plastoquinone + NADH + (n+1) H(+)(in) = a plastoquinol + NAD(+) + n H(+)(out). The catalysed reaction is a plastoquinone + NADPH + (n+1) H(+)(in) = a plastoquinol + NADP(+) + n H(+)(out). Functionally, NDH shuttles electrons from NAD(P)H:plastoquinone, via FMN and iron-sulfur (Fe-S) centers, to quinones in the photosynthetic chain and possibly in a chloroplast respiratory chain. The immediate electron acceptor for the enzyme in this species is believed to be plastoquinone. Couples the redox reaction to proton translocation, and thus conserves the redox energy in a proton gradient. This is NAD(P)H-quinone oxidoreductase subunit 3, chloroplastic from Hordeum vulgare (Barley).